Consider the following 58-residue polypeptide: Succinate dehydrogenase subunit 8B, mitochondrial (58 aa).

Component of complex II composed of eight subunits in plants: four classical SDH subunits SDH1, SDH2, SDH3 and SDH4 (a flavoprotein (FP), an iron-sulfur protein (IP), and a cytochrome b composed of a large and a small subunit.), as well as four subunits unknown in mitochondria from bacteria and heterotrophic eukaryotes.

Its subcellular location is the mitochondrion inner membrane. Its pathway is carbohydrate metabolism; tricarboxylic acid cycle. This Oryza sativa subsp. japonica (Rice) protein is Succinate dehydrogenase subunit 8B, mitochondrial.